The following is a 172-amino-acid chain: Stellate protein CG33243 (172 aa).

It belongs to the casein kinase 2 subunit beta family. As to quaternary structure, interacts in vitro with the casein kinase 2 alpha subunit (CkII-alpha). The relevance of such interaction is however unclear in vivo. Probably not expressed in wild-type flies. In males lacking the Y chromosome, it is testis-specific and constitutes the main component of star-shaped crystals.

Its function is as follows. Unknown. In males lacking the Y chromosome, its strong overexpression leads to the appearance of proteinaceous star-shaped crystals in the primary spermatocytes causing meiotic drive, possibly by interfering with normal casein kinase 2 activity. In Drosophila melanogaster (Fruit fly), this protein is Stellate protein CG33243 (Ste:CG33243).